The chain runs to 127 residues: Holo-[acyl-carrier-protein] synthase (127 aa).

The Mg(2+) site is built by D8 and E56.

The protein belongs to the P-Pant transferase superfamily. AcpS family. Mg(2+) serves as cofactor.

The protein localises to the cytoplasm. The catalysed reaction is apo-[ACP] + CoA = holo-[ACP] + adenosine 3',5'-bisphosphate + H(+). In terms of biological role, transfers the 4'-phosphopantetheine moiety from coenzyme A to a Ser of acyl-carrier-protein. The sequence is that of Holo-[acyl-carrier-protein] synthase from Cytophaga hutchinsonii (strain ATCC 33406 / DSM 1761 / CIP 103989 / NBRC 15051 / NCIMB 9469 / D465).